A 626-amino-acid chain; its full sequence is 1-deoxy-D-xylulose-5-phosphate synthase 2 (626 aa).

Residues histidine 74 and 115–117 each bind thiamine diphosphate; that span reads GHA. Aspartate 146 lines the Mg(2+) pocket. Residues 147-148, asparagine 175, phenylalanine 286, and glutamate 368 contribute to the thiamine diphosphate site; that span reads GS. Residue asparagine 175 coordinates Mg(2+).

Belongs to the transketolase family. DXPS subfamily. Homodimer. The cofactor is Mg(2+). It depends on thiamine diphosphate as a cofactor.

The enzyme catalyses D-glyceraldehyde 3-phosphate + pyruvate + H(+) = 1-deoxy-D-xylulose 5-phosphate + CO2. It participates in metabolic intermediate biosynthesis; 1-deoxy-D-xylulose 5-phosphate biosynthesis; 1-deoxy-D-xylulose 5-phosphate from D-glyceraldehyde 3-phosphate and pyruvate: step 1/1. Functionally, catalyzes the acyloin condensation reaction between C atoms 2 and 3 of pyruvate and glyceraldehyde 3-phosphate to yield 1-deoxy-D-xylulose-5-phosphate (DXP). The protein is 1-deoxy-D-xylulose-5-phosphate synthase 2 of Geobacter sulfurreducens (strain ATCC 51573 / DSM 12127 / PCA).